Reading from the N-terminus, the 137-residue chain is Phosphomevalonate dehydratase small subunit (137 aa).

The active-site Proton acceptor is the serine 62.

It belongs to the AcnX type II small subunit family. Heterodimer composed of a large subunit (PMDh-L) and a small subunit (PMDh-S).

It catalyses the reaction (R)-5-phosphomevalonate = (2E)-3-methyl-5-phosphooxypent-2-enoate + H2O. The protein operates within isoprenoid biosynthesis; isopentenyl diphosphate biosynthesis via mevalonate pathway. In terms of biological role, component of a hydro-lyase that catalyzes the dehydration of mevalonate 5-phosphate (MVA5P) to form trans-anhydromevalonate 5-phosphate (tAHMP). Involved in the archaeal mevalonate (MVA) pathway, which provides fundamental precursors for isoprenoid biosynthesis, such as isopentenyl diphosphate (IPP) and dimethylallyl diphosphate (DMAPP). The protein is Phosphomevalonate dehydratase small subunit of Methanothrix thermoacetophila (strain DSM 6194 / JCM 14653 / NBRC 101360 / PT) (Methanosaeta thermophila).